The chain runs to 323 residues: Annexin A3 (323 aa).

Ala2 is modified (N-acetylalanine). 4 Annexin repeats span residues 18–89 (FSPS…ALVT), 90–161 (APAL…TLAD), 173–245 (HLAK…AIVH), and 249–320 (NTPA…KICG). At Lys177 the chain carries N6-acetyllysine. At Thr267 the chain carries Phosphothreonine.

Belongs to the annexin family.

Functionally, inhibitor of phospholipase A2, also possesses anti-coagulant properties. In Mus musculus (Mouse), this protein is Annexin A3 (Anxa3).